Here is a 127-residue protein sequence, read N- to C-terminus: Putative 2Fe-2S ferredoxin (127 aa).

Residues Cys-23, Cys-54, and Cys-58 each contribute to the [2Fe-2S] cluster site.

This sequence belongs to the 2Fe2S Shethna-type ferredoxin family. It depends on [2Fe-2S] cluster as a cofactor.

In terms of biological role, ferredoxins are iron-sulfur proteins that transfer electrons in a wide variety of metabolic reactions. The polypeptide is Putative 2Fe-2S ferredoxin (cbiW) (Priestia megaterium (Bacillus megaterium)).